The sequence spans 380 residues: Cytochrome b (380 aa).

The next 4 membrane-spanning stretches (helical) occupy residues 34-54 (FGSL…LLAM), 78-99 (WLIR…FLHI), 114-134 (WNTG…GYVL), and 179-199 (FFAL…IHLT). The heme b site is built by H84 and H98. Residues H183 and H197 each contribute to the heme b site. Residue H202 coordinates a ubiquinone. 4 consecutive transmembrane segments (helical) span residues 227-247 (IKDI…ALFS), 289-309 (LGGV…PFLH), 321-341 (LSQT…WIGS), and 348-368 (FIII…ILFP).

It belongs to the cytochrome b family. In terms of assembly, the cytochrome bc1 complex contains 11 subunits: 3 respiratory subunits (MT-CYB, CYC1 and UQCRFS1), 2 core proteins (UQCRC1 and UQCRC2) and 6 low-molecular weight proteins (UQCRH/QCR6, UQCRB/QCR7, UQCRQ/QCR8, UQCR10/QCR9, UQCR11/QCR10 and a cleavage product of UQCRFS1). This cytochrome bc1 complex then forms a dimer. The cofactor is heme b.

It localises to the mitochondrion inner membrane. Its function is as follows. Component of the ubiquinol-cytochrome c reductase complex (complex III or cytochrome b-c1 complex) that is part of the mitochondrial respiratory chain. The b-c1 complex mediates electron transfer from ubiquinol to cytochrome c. Contributes to the generation of a proton gradient across the mitochondrial membrane that is then used for ATP synthesis. This Coturnix japonica (Japanese quail) protein is Cytochrome b (MT-CYB).